Consider the following 1085-residue polypeptide: Error-prone DNA polymerase 2 (1085 aa).

The interval 1040–1066 (AGRGDEFAHGGGGPDSRDRQKPVVPRD) is disordered.

The protein belongs to the DNA polymerase type-C family. DnaE2 subfamily.

It is found in the cytoplasm. The enzyme catalyses DNA(n) + a 2'-deoxyribonucleoside 5'-triphosphate = DNA(n+1) + diphosphate. DNA polymerase involved in damage-induced mutagenesis and translesion synthesis (TLS). It is not the major replicative DNA polymerase. The sequence is that of Error-prone DNA polymerase 2 from Agrobacterium fabrum (strain C58 / ATCC 33970) (Agrobacterium tumefaciens (strain C58)).